The sequence spans 207 residues: Small ribosomal subunit protein uS4A (207 aa).

Residues 98-163 (TRLDNLVYRL…SPKFKELKEN (66 aa)) enclose the S4 RNA-binding domain.

The protein belongs to the universal ribosomal protein uS4 family. In terms of assembly, part of the 30S ribosomal subunit. Contacts protein S5. The interaction surface between S4 and S5 is involved in control of translational fidelity.

One of the primary rRNA binding proteins, it binds directly to 16S rRNA where it nucleates assembly of the body of the 30S subunit. Functionally, with S5 and S12 plays an important role in translational accuracy. The chain is Small ribosomal subunit protein uS4A from Alkaliphilus metalliredigens (strain QYMF).